The primary structure comprises 167 residues: Small ribosomal subunit protein uS5 (167 aa).

Positions 12-75 constitute an S5 DRBM domain; that stretch reads LQEKLIAVNR…EKARRSMVTI (64 aa).

It belongs to the universal ribosomal protein uS5 family. In terms of assembly, part of the 30S ribosomal subunit. Contacts proteins S4 and S8.

Functionally, with S4 and S12 plays an important role in translational accuracy. Located at the back of the 30S subunit body where it stabilizes the conformation of the head with respect to the body. The protein is Small ribosomal subunit protein uS5 of Vibrio cholerae serotype O1 (strain ATCC 39541 / Classical Ogawa 395 / O395).